Here is a 290-residue protein sequence, read N- to C-terminus: UPF0761 membrane protein YihY (290 aa).

6 helical membrane passes run 44–64 (LLSLVPLIAVVFALFAAFPMF), 104–124 (VGACGLIVTALLLMYAIDSAL), 140–160 (FAVYWMILTLGPLLAGASLAI), 183–203 (ILPLLLSWISFWLLYSIVPTT), 210–230 (ALVGAFVAALLFEAGKKGFAL), and 244–264 (VLAVIPILFVWVYWTWCIVLL).

It belongs to the UPF0761 family.

The protein localises to the cell inner membrane. This is UPF0761 membrane protein YihY from Salmonella agona (strain SL483).